The following is a 131-amino-acid chain: Ribosome-binding factor A (131 aa).

The protein belongs to the RbfA family. In terms of assembly, monomer. Binds 30S ribosomal subunits, but not 50S ribosomal subunits or 70S ribosomes.

It is found in the cytoplasm. One of several proteins that assist in the late maturation steps of the functional core of the 30S ribosomal subunit. Associates with free 30S ribosomal subunits (but not with 30S subunits that are part of 70S ribosomes or polysomes). Required for efficient processing of 16S rRNA. May interact with the 5'-terminal helix region of 16S rRNA. This chain is Ribosome-binding factor A, found in Mannheimia succiniciproducens (strain KCTC 0769BP / MBEL55E).